The following is a 50-amino-acid chain: F420-non-reducing hydrogenase vhu subunit U (50 aa).

Ni(2+) is bound by residues Sec-27 and Cys-30. Position 27 (Sec-27) is a non-standard amino acid, selenocysteine. The propeptide at Ile-34–Glu-50 is removed in mature form.

This sequence belongs to the [NiFe]/[NiFeSe] hydrogenase large subunit family. In terms of assembly, the F420-non-reducing hydrogenase vhu is composed of four subunits; VhuA, VhuD, VhuG and VhuU. Ni(2+) serves as cofactor.

The protein is F420-non-reducing hydrogenase vhu subunit U (vhuU) of Methanocaldococcus jannaschii (strain ATCC 43067 / DSM 2661 / JAL-1 / JCM 10045 / NBRC 100440) (Methanococcus jannaschii).